Consider the following 499-residue polypeptide: Glycerol kinase (499 aa).

Threonine 11 lines the ADP pocket. ATP-binding residues include threonine 11, serine 12, and serine 13. Threonine 11 contributes to the sn-glycerol 3-phosphate binding site. ADP is bound at residue arginine 15. Sn-glycerol 3-phosphate contacts are provided by arginine 81, glutamate 82, tyrosine 133, and aspartate 242. Glycerol contacts are provided by arginine 81, glutamate 82, tyrosine 133, aspartate 242, and glutamine 243. ADP-binding residues include threonine 264 and glycine 309. Residues threonine 264, glycine 309, glutamine 313, and glycine 414 each contribute to the ATP site. ADP contacts are provided by glycine 414 and asparagine 418.

This sequence belongs to the FGGY kinase family.

It catalyses the reaction glycerol + ATP = sn-glycerol 3-phosphate + ADP + H(+). It functions in the pathway polyol metabolism; glycerol degradation via glycerol kinase pathway; sn-glycerol 3-phosphate from glycerol: step 1/1. Its activity is regulated as follows. Inhibited by fructose 1,6-bisphosphate (FBP). Key enzyme in the regulation of glycerol uptake and metabolism. Catalyzes the phosphorylation of glycerol to yield sn-glycerol 3-phosphate. The sequence is that of Glycerol kinase from Methylibium petroleiphilum (strain ATCC BAA-1232 / LMG 22953 / PM1).